We begin with the raw amino-acid sequence, 645 residues long: Alkyldihydroxyacetonephosphate synthase, peroxisomal (645 aa).

The span at 1–10 (MAEAAAGEAG) shows a compositional bias: low complexity. The N-terminal 45 residues, 1-45 (MAEAAAGEAGASERDPDAGRARRRLRVLSGHLLGRPQEAPSTNEC), are a transit peptide targeting the peroxisome. The disordered stretch occupies residues 1 to 72 (MAEAAAGEAG…AAPESGTIPK (72 aa)). Basic and acidic residues predominate over residues 11 to 20 (ASERDPDAGR). Residues 50 to 69 (AASAAGASPAATPAAPESGT) are compositionally biased toward low complexity. Phosphoserine occurs at positions 52 and 57. A Phosphothreonine modification is found at threonine 61. At lysine 89 the chain carries N6-acetyllysine. Residues 189-371 (FERIPDIVVW…TEATIKIRPT (183 aa)) form the FAD-binding PCMH-type domain. FAD contacts are provided by residues 221 to 227 (PIGGGTS), 290 to 296 (DSLEFST), and 303 to 306 (TRAS). At lysine 334 the chain carries N6-acetyllysine. 355–361 (EGTLGVI) contributes to the FAD binding site. Arginine 502 lines the substrate pocket. Tyrosine 565 serves as the catalytic Proton donor/acceptor. Important for enzyme activity stretches follow at residues 602 to 604 (HHH) and 641 to 645 (NRNLL).

Belongs to the FAD-binding oxidoreductase/transferase type 4 family. Homodimer. Requires FAD as cofactor.

It localises to the peroxisome membrane. The protein resides in the peroxisome. It catalyses the reaction a long chain fatty alcohol + a 1-acylglycerone 3-phosphate = a 1-O-alkylglycerone 3-phosphate + a long-chain fatty acid + H(+). The enzyme catalyses hexadecan-1-ol + 1-hexadecanoylglycerone 3-phosphate = 1-O-hexadecylglycerone 3-phosphate + hexadecanoate + H(+). It carries out the reaction 1-hexadecanoylglycerone 3-phosphate + a long-chain fatty acid = a 1-acylglycerone 3-phosphate + hexadecanoate. It functions in the pathway glycerolipid metabolism; ether lipid biosynthesis. Its function is as follows. Catalyzes the exchange of the acyl chain in acyl-dihydroxyacetonephosphate (acyl-DHAP) for a long chain fatty alcohol, yielding the first ether linked intermediate, i.e. alkyl-dihydroxyacetonephosphate (alkyl-DHAP), in the pathway of ether lipid biosynthesis. The chain is Alkyldihydroxyacetonephosphate synthase, peroxisomal (Agps) from Mus musculus (Mouse).